Reading from the N-terminus, the 22-residue chain is MEFVAKLFKFFKDLLGKFLGNN.

The protein belongs to the phenol-soluble modulin alpha peptides family.

In terms of biological role, peptide which can recruit, activate and subsequently lyse human neutrophils, thus eliminating the main cellular defense against infection. This chain is Phenol-soluble modulin alpha 3 peptide (psmA3), found in Staphylococcus aureus (strain Mu3 / ATCC 700698).